The chain runs to 443 residues: MNNDNIAQLIADFPLIEKMVELKEVSWFNPNITSLQEGLPYVGLDNNNIQDASDRLARFAPYMVKAFPETAITNGIIESDVVEISAMKSQLEQQYEVEIQGKLLLKKDSHLPISGSIKARGGIYEVLTHAEQLAIKAEVLELSDDYSKLFTEEFKSFFSQYSIAVGSTGNLGMSIGIMSAKLGFSVSVHMSADARQWKKEKLRAHGVNVVEYNEDYSVAVEQGRQEAENDPKCFFIDDENSQTLFLGYSVAGERLKQQFDAMHIVVDENNPLFVYLPCGVGGGPGGVAFGLKMAFGDNVHCIFAEPTHSPCMLLGILTGLHDGIAVQDIGIDNITAADGLAVGRASGFVGRAMERLLDGFYTISDQRMYDLLGLLNKVEGIQLEPSALAGMLGPIVVTNNDEYLKRINMSNEKLVNATHLIWATGGGMVPAIEMEKYLSKAGS.

Position 118 is an N6-(pyridoxal phosphate)lysine (Lys-118).

It belongs to the serine/threonine dehydratase family. DsdA subfamily. It depends on pyridoxal 5'-phosphate as a cofactor.

The enzyme catalyses D-serine = pyruvate + NH4(+). The sequence is that of Probable D-serine dehydratase from Colwellia psychrerythraea (strain 34H / ATCC BAA-681) (Vibrio psychroerythus).